A 438-amino-acid polypeptide reads, in one-letter code: GDP-mannose 6-dehydrogenase (438 aa).

Residues Tyr10, Val11, Asp30, Lys35, Thr86, and Thr124 each contribute to the NAD(+) site. GDP-alpha-D-mannuronate is bound by residues Glu161, Lys210, Asn214, His217, Asn225, Tyr256, Tyr257, Arg259, Phe262, and Gly265. The active site involves Cys268. Position 271 (Lys271) interacts with NAD(+). Lys324 provides a ligand contact to GDP-alpha-D-mannuronate. Arg331 provides a ligand contact to NAD(+).

It belongs to the UDP-glucose/GDP-mannose dehydrogenase family.

It catalyses the reaction GDP-alpha-D-mannose + 2 NAD(+) + H2O = GDP-alpha-D-mannuronate + 2 NADH + 3 H(+). It participates in glycan biosynthesis; alginate biosynthesis. Functionally, catalyzes the oxidation of guanosine diphospho-D-mannose (GDP-D-mannose) to GDP-D-mannuronic acid, a precursor for alginate polymerization. The alginate layer causes a mucoid phenotype and provides a protective barrier against host immune defenses and antibiotics. This chain is GDP-mannose 6-dehydrogenase (algD), found in Pseudomonas putida (strain ATCC 47054 / DSM 6125 / CFBP 8728 / NCIMB 11950 / KT2440).